We begin with the raw amino-acid sequence, 558 residues long: Ribonuclease J (558 aa).

Residues His-81, His-83, Asp-85, His-86, His-148, and Asp-170 each coordinate Zn(2+). Substrate is bound at residue 371 to 375 (HVSGH). His-397 contacts Zn(2+).

This sequence belongs to the metallo-beta-lactamase superfamily. RNA-metabolizing metallo-beta-lactamase-like family. Bacterial RNase J subfamily. In terms of assembly, homodimer, may be a subunit of the RNA degradosome. Zn(2+) is required as a cofactor.

It localises to the cytoplasm. In terms of biological role, an RNase that has 5'-3' exonuclease and possibly endoonuclease activity. Involved in maturation of rRNA and in some organisms also mRNA maturation and/or decay. In Mycobacterium tuberculosis (strain CDC 1551 / Oshkosh), this protein is Ribonuclease J.